A 232-amino-acid polypeptide reads, in one-letter code: Large ribosomal subunit protein uL1 (232 aa).

Belongs to the universal ribosomal protein uL1 family. As to quaternary structure, part of the 50S ribosomal subunit.

Its function is as follows. Binds directly to 23S rRNA. The L1 stalk is quite mobile in the ribosome, and is involved in E site tRNA release. Functionally, protein L1 is also a translational repressor protein, it controls the translation of the L11 operon by binding to its mRNA. The protein is Large ribosomal subunit protein uL1 of Azorhizobium caulinodans (strain ATCC 43989 / DSM 5975 / JCM 20966 / LMG 6465 / NBRC 14845 / NCIMB 13405 / ORS 571).